We begin with the raw amino-acid sequence, 367 residues long: 2,6-dihydropseudooxynicotine hydrolase (367 aa).

Catalysis depends on residues glutamate 148, serine 217, aspartate 300, and histidine 329.

This sequence belongs to the AB hydrolase superfamily. As to quaternary structure, homodimer.

It carries out the reaction 2,6-dihydroxypseudooxynicotine + H2O = 2,6-dihydroxypyridine + 4-(methylamino)butanoate + H(+). It functions in the pathway alkaloid degradation; nicotine degradation; 2,6-dihydroxypyridine and 4-(methylamino)butanoate from 6-hydroxypseudooxynicotine: step 2/2. L-nicotine is used as a growth substrate. Plays a role in nicotine catabolism by cleaving a C-C bond in 2,6-dihydroxypseudooxynicotine. In Paenarthrobacter nicotinovorans (Arthrobacter nicotinovorans), this protein is 2,6-dihydropseudooxynicotine hydrolase.